The primary structure comprises 845 residues: G-type lectin S-receptor-like serine/threonine-protein kinase At1g11410 (845 aa).

Positions 1–21 are cleaved as a signal peptide; the sequence is MKFFFIFFIFLFSFLIQSCYS. One can recognise a Bulb-type lectin domain in the interval 22–147; that stretch reads DNTILRSQSL…VTGKSFWESF (126 aa). At 22 to 441 the chain is on the extracellular side; that stretch reads DNTILRSQSL…NGNGASGKKR (420 aa). 5 N-linked (GlcNAc...) asparagine glycosylation sites follow: N82, N103, N185, N231, and N259. An EGF-like domain is found at 283-321; sequence PEDKCDIYNHCGFNGYCDSTSTEKFECSCLPGYEPKTPR. Cystine bridges form between C287–C299 and C293–C309. The PAN domain maps to 341–424; the sequence is CNGKEGFAKL…SGQDFYLRVD (84 aa). Residues N357, N366, and N379 are each glycosylated (N-linked (GlcNAc...) asparagine). 2 disulfide bridges follow: C372-C399 and C376-C382. A helical transmembrane segment spans residues 442 to 462; that stretch reads LVLILISLIAVVMLLLISFHC. At 463–845 the chain is on the cytoplasmic side; the sequence is YLRKRRQRTQ…DVTLTDVQGR (383 aa). The Protein kinase domain maps to 523-808; the sequence is FAFQNKLGAG…DLPSPKHPAF (286 aa). ATP is bound by residues 529–537 and K551; that span reads LGAGGFGPV. The interval 612–629 is caM-binding; sequence EQRAELDWPKRMGIIRGI. Residue D648 is the Proton acceptor of the active site. The segment at 803–845 is disordered; sequence PKHPAFTAGRRRNTKTGGSSDNWPSGETSSTINDVTLTDVQGR. Residues 817-845 are compositionally biased toward polar residues; it reads KTGGSSDNWPSGETSSTINDVTLTDVQGR.

Belongs to the protein kinase superfamily. Ser/Thr protein kinase family.

Its subcellular location is the cell membrane. The catalysed reaction is L-seryl-[protein] + ATP = O-phospho-L-seryl-[protein] + ADP + H(+). It catalyses the reaction L-threonyl-[protein] + ATP = O-phospho-L-threonyl-[protein] + ADP + H(+). This Arabidopsis thaliana (Mouse-ear cress) protein is G-type lectin S-receptor-like serine/threonine-protein kinase At1g11410.